Consider the following 127-residue polypeptide: Large ribosomal subunit protein eL18 (127 aa).

This sequence belongs to the eukaryotic ribosomal protein eL18 family.

In Methanopyrus kandleri (strain AV19 / DSM 6324 / JCM 9639 / NBRC 100938), this protein is Large ribosomal subunit protein eL18.